Consider the following 304-residue polypeptide: Glycine--tRNA ligase alpha subunit (304 aa).

It belongs to the class-II aminoacyl-tRNA synthetase family. As to quaternary structure, tetramer of two alpha and two beta subunits.

It is found in the cytoplasm. It catalyses the reaction tRNA(Gly) + glycine + ATP = glycyl-tRNA(Gly) + AMP + diphosphate. In Streptococcus agalactiae serotype III (strain NEM316), this protein is Glycine--tRNA ligase alpha subunit.